Reading from the N-terminus, the 225-residue chain is NAD(P)H-quinone oxidoreductase subunit K, chloroplastic (225 aa).

[4Fe-4S] cluster contacts are provided by Cys43, Cys44, Cys108, and Cys139.

The protein belongs to the complex I 20 kDa subunit family. As to quaternary structure, NDH is composed of at least 16 different subunits, 5 of which are encoded in the nucleus. [4Fe-4S] cluster serves as cofactor.

It localises to the plastid. Its subcellular location is the chloroplast thylakoid membrane. The enzyme catalyses a plastoquinone + NADH + (n+1) H(+)(in) = a plastoquinol + NAD(+) + n H(+)(out). It carries out the reaction a plastoquinone + NADPH + (n+1) H(+)(in) = a plastoquinol + NADP(+) + n H(+)(out). Functionally, NDH shuttles electrons from NAD(P)H:plastoquinone, via FMN and iron-sulfur (Fe-S) centers, to quinones in the photosynthetic chain and possibly in a chloroplast respiratory chain. The immediate electron acceptor for the enzyme in this species is believed to be plastoquinone. Couples the redox reaction to proton translocation, and thus conserves the redox energy in a proton gradient. The chain is NAD(P)H-quinone oxidoreductase subunit K, chloroplastic from Helianthus annuus (Common sunflower).